The following is a 105-amino-acid chain: Cuticle protein AMP4 (105 aa).

Positions 1 to 21 are disordered; the sequence is DRDAQTLTDERNDQGDGNFRY. The region spanning 16 to 81 is the Chitin-binding type R&amp;R domain; that stretch reads DGNFRYEFET…PSSDLLPVGP (66 aa).

Arthrodial membrane.

The chain is Cuticle protein AMP4 from Homarus americanus (American lobster).